We begin with the raw amino-acid sequence, 279 residues long: Methyltransferase ausD (279 aa).

S-adenosyl-L-methionine contacts are provided by residues 124-125, 152-153, and R244; these read DL and DI.

The protein belongs to the class I-like SAM-binding methyltransferase superfamily. In terms of assembly, homodimer.

Its pathway is secondary metabolite biosynthesis; terpenoid biosynthesis. Its function is as follows. Methyltransferase; part of the gene cluster that mediates the biosynthesis of calidodehydroaustin, a fungal meroterpenoid. The first step of the pathway is the synthesis of 3,5-dimethylorsellinic acid by the polyketide synthase ausA. 3,5-dimethylorsellinic acid is then prenylated by the polyprenyl transferase ausN. Further epoxidation by the FAD-dependent monooxygenase ausM and cyclization by the probable terpene cyclase ausL lead to the formation of protoaustinoid A. Protoaustinoid A is then oxidized to spiro-lactone preaustinoid A3 by the combined action of the FAD-binding monooxygenases ausB and ausC, and the dioxygenase ausE. Acid-catalyzed keto-rearrangement and ring contraction of the tetraketide portion of preaustinoid A3 by ausJ lead to the formation of preaustinoid A4. The aldo-keto reductase ausK, with the help of ausH, is involved in the next step by transforming preaustinoid A4 into isoaustinone which is in turn hydroxylated by the P450 monooxygenase ausI to form austinolide. The cytochrome P450 monooxygenase ausG modifies austinolide to austinol. Austinol is further acetylated to austin by the O-acetyltransferase ausP, which spontaneously changes to dehydroaustin. The cytochrome P450 monooxygenase ausR then converts dehydroaustin is into 7-dehydrodehydroaustin. The hydroxylation catalyzed by ausR permits the O-acetyltransferase ausQ to add an additional acetyl group to the molecule, leading to the formation of acetoxydehydroaustin. The short chain dehydrogenase ausT catalyzes the reduction of the double bond present between carbon atoms 1 and 2 to convert 7-dehydrodehydroaustin into 1,2-dihydro-7-hydroxydehydroaustin. AusQ catalyzes not only an acetylation reaction but also the addition of the PKS ausV diketide product to 1,2-dihydro-7-hydroxydehydroaustin, forming precalidodehydroaustin. Finally, the iron/alpha-ketoglutarate-dependent dioxygenase converts precalidodehydroaustin into calidodehydroaustin. This Aspergillus calidoustus protein is Methyltransferase ausD.